Consider the following 335-residue polypeptide: Glyceraldehyde-3-phosphate dehydrogenase 2 (335 aa).

Residues 12-13 (RI), aspartate 35, arginine 79, and serine 121 each bind NAD(+). D-glyceraldehyde 3-phosphate is bound by residues 152-154 (SCT) and threonine 183. The Nucleophile role is filled by cysteine 153. Asparagine 184 lines the NAD(+) pocket. Residues arginine 198, 211–212 (TG), and arginine 234 each bind D-glyceraldehyde 3-phosphate. Asparagine 316 is a binding site for NAD(+).

The protein belongs to the glyceraldehyde-3-phosphate dehydrogenase family. In terms of assembly, homotetramer.

The protein resides in the cytoplasm. It carries out the reaction D-glyceraldehyde 3-phosphate + phosphate + NAD(+) = (2R)-3-phospho-glyceroyl phosphate + NADH + H(+). The protein operates within carbohydrate degradation; glycolysis; pyruvate from D-glyceraldehyde 3-phosphate: step 1/5. Inhibited by pentalenolactone. Its function is as follows. Catalyzes the oxidative phosphorylation of glyceraldehyde 3-phosphate (G3P) to 1,3-bisphosphoglycerate (BPG) using the cofactor NAD. The first reaction step involves the formation of a hemiacetal intermediate between G3P and a cysteine residue, and this hemiacetal intermediate is then oxidized to a thioester, with concomitant reduction of NAD to NADH. The reduced NADH is then exchanged with the second NAD, and the thioester is attacked by a nucleophilic inorganic phosphate to produce BPG. This Streptomyces avermitilis (strain ATCC 31267 / DSM 46492 / JCM 5070 / NBRC 14893 / NCIMB 12804 / NRRL 8165 / MA-4680) protein is Glyceraldehyde-3-phosphate dehydrogenase 2 (gap2).